A 127-amino-acid chain; its full sequence is MLQLLLAVFIGGGTGSVARWLLSMRFNPLHQAIPLGTLAANLIGAFIIGMGFAWFSRMTNIDPVWKVLITTGFCGGLTTFSTFSAEVVFLLQEGRFGWALLNVFVNLLGSFAMTALAFWLFSASTAH.

A run of 4 helical transmembrane segments spans residues 4-24 (LLLA…LLSM), 35-55 (LGTL…FAWF), 71-91 (TGFC…VFLL), and 103-123 (VFVN…LFSA). Residues Gly-75 and Thr-78 each contribute to the Na(+) site.

It belongs to the fluoride channel Fluc/FEX (TC 1.A.43) family.

Its subcellular location is the cell inner membrane. The enzyme catalyses fluoride(in) = fluoride(out). With respect to regulation, na(+) is not transported, but it plays an essential structural role and its presence is essential for fluoride channel function. Functionally, fluoride-specific ion channel. Important for reducing fluoride concentration in the cell, thus reducing its toxicity. This chain is Fluoride-specific ion channel FluC, found in Escherichia coli O8 (strain IAI1).